Here is a 102-residue protein sequence, read N- to C-terminus: Neuropeptide F (102 aa).

Residues 1 to 29 (MSNTMRCILIVCVALTLIAAGCNVEASNS) form the signal peptide. The propeptide occupies 30–32 (RPP). Position 62 is a phenylalanine amide (F62). The propeptide occupies 66–102 (GGPLMEMLRNRELENNMAKSINSGGELIRALDEEEVF).

This sequence belongs to the NPY family.

Its subcellular location is the secreted. Functionally, an integral part of the sensory system that mediates food signaling, providing the neural basis for the regulation of food response; coordinates larval foraging and social behavior changes during development. May have a hormonal role in females. This is Neuropeptide F from Drosophila pseudoobscura pseudoobscura (Fruit fly).